Here is a 165-residue protein sequence, read N- to C-terminus: Phosphopantetheine adenylyltransferase (165 aa).

T9 contributes to the substrate binding site. Residues T9 to F10 and H17 contribute to the ATP site. Residues K41, L73, and R87 each contribute to the substrate site. ATP contacts are provided by residues G88–R90, E98, and L123–R129.

The protein belongs to the bacterial CoaD family. As to quaternary structure, homohexamer. Requires Mg(2+) as cofactor.

The protein localises to the cytoplasm. The catalysed reaction is (R)-4'-phosphopantetheine + ATP + H(+) = 3'-dephospho-CoA + diphosphate. Its pathway is cofactor biosynthesis; coenzyme A biosynthesis; CoA from (R)-pantothenate: step 4/5. In terms of biological role, reversibly transfers an adenylyl group from ATP to 4'-phosphopantetheine, yielding dephospho-CoA (dPCoA) and pyrophosphate. The protein is Phosphopantetheine adenylyltransferase of Rhizorhabdus wittichii (strain DSM 6014 / CCUG 31198 / JCM 15750 / NBRC 105917 / EY 4224 / RW1) (Sphingomonas wittichii).